A 495-amino-acid chain; its full sequence is Pentatricopeptide repeat-containing protein PPR5 homolog, chloroplastic (495 aa).

Positions methionine 1–alanine 24 are disordered. A chloroplast-targeting transit peptide spans methionine 1–alanine 29. PPR repeat units lie at residues aspartate 120–proline 154, aspartate 155–isoleucine 189, asparagine 195–proline 229, aspartate 230–proline 264, aspartate 265–proline 299, threonine 300–proline 334, asparagine 335–serine 365, histidine 370–proline 404, and serine 405–proline 439. A disordered region spans residues aspartate 455–alanine 495. The span at proline 462 to alanine 495 shows a compositional bias: polar residues.

Belongs to the PPR family. P subfamily.

The protein resides in the plastid. It localises to the chloroplast. Its function is as follows. Involved in the biogenesis of the plastid translation machinery by promoting the splicing of group II introns in chloroplasts. The chain is Pentatricopeptide repeat-containing protein PPR5 homolog, chloroplastic from Oryza sativa subsp. japonica (Rice).